A 137-amino-acid chain; its full sequence is uncharacterized protein (137 aa).

The signal sequence occupies residues 1–21 (MFNRRVLFLSVFSCAVFMLSG). Cys-22 is lipidated: N-palmitoyl cysteine. The S-diacylglycerol cysteine moiety is linked to residue Cys-22.

Its subcellular location is the membrane. This is an uncharacterized protein from Escherichia coli (strain K12).